A 236-amino-acid polypeptide reads, in one-letter code: DNA repair and recombination protein RadB (236 aa).

Belongs to the eukaryotic RecA-like protein family. RadB subfamily.

In terms of biological role, involved in DNA repair and in homologous recombination. May regulate the cleavage reactions of the branch-structured DNA. Has a very weak ATPase activity that is not stimulated by DNA. Binds DNA but does not promote DNA strands exchange. In Halobacterium salinarum (strain ATCC 29341 / DSM 671 / R1), this protein is DNA repair and recombination protein RadB.